The sequence spans 302 residues: Glutaminase (302 aa).

Residues S61, N111, E155, N162, Y186, Y238, and V256 each coordinate substrate.

It belongs to the glutaminase family. In terms of assembly, homotetramer.

It catalyses the reaction L-glutamine + H2O = L-glutamate + NH4(+). The sequence is that of Glutaminase from Pseudomonas fluorescens (strain Pf0-1).